A 394-amino-acid chain; its full sequence is Nicotinate phosphoribosyltransferase (394 aa).

A Phosphohistidine; by autocatalysis modification is found at His-218.

It belongs to the NAPRTase family. In terms of processing, transiently phosphorylated on a His residue during the reaction cycle. Phosphorylation strongly increases the affinity for substrates and increases the rate of nicotinate D-ribonucleotide production. Dephosphorylation regenerates the low-affinity form of the enzyme, leading to product release.

It carries out the reaction nicotinate + 5-phospho-alpha-D-ribose 1-diphosphate + ATP + H2O = nicotinate beta-D-ribonucleotide + ADP + phosphate + diphosphate. The protein operates within cofactor biosynthesis; NAD(+) biosynthesis; nicotinate D-ribonucleotide from nicotinate: step 1/1. In terms of biological role, catalyzes the synthesis of beta-nicotinate D-ribonucleotide from nicotinate and 5-phospho-D-ribose 1-phosphate at the expense of ATP. The polypeptide is Nicotinate phosphoribosyltransferase (Xylella fastidiosa (strain 9a5c)).